Reading from the N-terminus, the 167-residue chain is CGG triplet repeat-binding protein 1 (167 aa).

A Phosphoserine modification is found at serine 56. Positions 80 to 84 match the Nuclear localization signal motif; sequence RKKQR. A Phosphoserine modification is found at serine 164.

Ubiquitous. Highly expressed in placenta, thymus, lymph nodes, cerebellum and cerebral cortex. Low expression in other regions of the brain.

The protein resides in the nucleus. Functionally, binds to nonmethylated 5'-d(CGG)(n)-3' trinucleotide repeats in the FMR1 promoter. May play a role in regulating FMR1 promoter. This chain is CGG triplet repeat-binding protein 1 (CGGBP1), found in Homo sapiens (Human).